Here is a 742-residue protein sequence, read N- to C-terminus: Phosphoribosylformylglycinamidine synthase subunit PurL (742 aa).

His53 is an active-site residue. Residues Tyr56 and Lys95 each coordinate ATP. Residue Glu97 participates in Mg(2+) binding. Substrate is bound by residues 98-101 (SHNH) and Arg120. Residue His99 is the Proton acceptor of the active site. Asp121 contacts Mg(2+). Residue Gln244 coordinates substrate. Asp274 contacts Mg(2+). Residue 318–320 (ESQ) coordinates substrate. Residues Asp501 and Gly538 each coordinate ATP. Asn539 contributes to the Mg(2+) binding site. Ser541 contacts substrate.

It belongs to the FGAMS family. As to quaternary structure, monomer. Part of the FGAM synthase complex composed of 1 PurL, 1 PurQ and 2 PurS subunits.

The protein resides in the cytoplasm. The catalysed reaction is N(2)-formyl-N(1)-(5-phospho-beta-D-ribosyl)glycinamide + L-glutamine + ATP + H2O = 2-formamido-N(1)-(5-O-phospho-beta-D-ribosyl)acetamidine + L-glutamate + ADP + phosphate + H(+). It functions in the pathway purine metabolism; IMP biosynthesis via de novo pathway; 5-amino-1-(5-phospho-D-ribosyl)imidazole from N(2)-formyl-N(1)-(5-phospho-D-ribosyl)glycinamide: step 1/2. Functionally, part of the phosphoribosylformylglycinamidine synthase complex involved in the purines biosynthetic pathway. Catalyzes the ATP-dependent conversion of formylglycinamide ribonucleotide (FGAR) and glutamine to yield formylglycinamidine ribonucleotide (FGAM) and glutamate. The FGAM synthase complex is composed of three subunits. PurQ produces an ammonia molecule by converting glutamine to glutamate. PurL transfers the ammonia molecule to FGAR to form FGAM in an ATP-dependent manner. PurS interacts with PurQ and PurL and is thought to assist in the transfer of the ammonia molecule from PurQ to PurL. This Limosilactobacillus reuteri (strain DSM 20016) (Lactobacillus reuteri) protein is Phosphoribosylformylglycinamidine synthase subunit PurL.